The chain runs to 374 residues: Glutamine synthetase (374 aa).

The interval 2–25 (TTSASSHLNKGIKQVYMSLPQGEK) is required for glutamine-induced ubiquitination by CRL4(CRBN) and proteasomal degradation. An N6-acetyllysine mark is found at lysine 11 and lysine 14. One can recognise a GS beta-grasp domain in the interval 24 to 106 (EKVQAMYIWI…VLCESFQVQF (83 aa)). The region spanning 114 to 374 (LRHTCKRIMD…TGDEPFQYKN (261 aa)) is the GS catalytic domain. Glutamate 135 provides a ligand contact to ATP. Mn(2+)-binding residues include glutamate 135, glutamate 137, glutamate 197, and glutamate 204. 204–209 (EFQIGP) provides a ligand contact to ATP. An L-glutamate-binding site is contributed by 247 to 248 (NW). Histidine 254 contributes to the Mn(2+) binding site. ATP contacts are provided by residues 256–258 (NFS), arginine 320, and arginine 325. Arginine 320 provides a ligand contact to L-glutamate. Position 337–339 (337–339 (YFE)) interacts with ADP. Mn(2+) is bound at residue glutamate 339. Arginine 341 is an L-glutamate binding site. Serine 344 is modified (phosphoserine).

Belongs to the glutamine synthetase family. In terms of assembly, decamer; composed of two pentamers. Interacts with PALMD. Interacts with RHOJ. Interacts with BEST2; this interaction tethers a fraction of GLUL to the membrane, causing a decrease of cytosolic glutamine synthase (GS) activity and inhibits the chloride channel activity of BEST2 by affecting the gating at the aperture in the absence of intracellular glutamate. The cofactor is Mg(2+). It depends on Mn(2+) as a cofactor. Palmitoylated; undergoes autopalmitoylation. Post-translationally, acetylated by EP300/p300; acetylation is stimulated by increased glutamine levels and promotes ubiquitin-mediated proteasomal degradation. In terms of processing, ubiquitinated by ZNRF1. Ubiquitinated by the DCX (DDB1-CUL4-X-box) E3 ubiquitin-protein ligase complex called CRL4(CRBN), leading to proteasomal degradation.

The protein localises to the cytoplasm. Its subcellular location is the cytosol. The protein resides in the microsome. It is found in the mitochondrion. It localises to the cell membrane. It catalyses the reaction L-glutamate + NH4(+) + ATP = L-glutamine + ADP + phosphate + H(+). It carries out the reaction L-cysteinyl-[protein] + hexadecanoyl-CoA = S-hexadecanoyl-L-cysteinyl-[protein] + CoA. Glutamine synthetase activity is inhibited by methionine sulfoximine (MSO). Glutamine synthetase that catalyzes the ATP-dependent conversion of glutamate and ammonia to glutamine. Its role depends on tissue localization: in the brain, it regulates the levels of toxic ammonia and converts neurotoxic glutamate to harmless glutamine, whereas in the liver, it is one of the enzymes responsible for the removal of ammonia. Plays a key role in ammonium detoxification during erythropoiesis: the glutamine synthetase activity is required to remove ammonium generated by porphobilinogen deaminase (HMBS) during heme biosynthesis to prevent ammonium accumulation and oxidative stress. Essential for proliferation of fetal skin fibroblasts. Independently of its glutamine synthetase activity, required for endothelial cell migration during vascular development. Involved in angiogenesis by regulating membrane localization and activation of the GTPase RHOJ, possibly by promoting RHOJ palmitoylation. May act as a palmitoyltransferase for RHOJ: able to autopalmitoylate and then transfer the palmitoyl group to RHOJ. Plays a role in ribosomal 40S subunit biogenesis. Through the interaction with BEST2, inhibits BEST2 channel activity by affecting the gating at the aperture in the absence of intracellular L-glutamate, but sensitizes BEST2 to intracellular L-glutamate, which promotes the opening of BEST2 and thus relieves its inhibitory effect on BEST2. The polypeptide is Glutamine synthetase (Macaca fascicularis (Crab-eating macaque)).